The chain runs to 477 residues: Glycogen synthase (477 aa).

K15 provides a ligand contact to ADP-alpha-D-glucose.

This sequence belongs to the glycosyltransferase 1 family. Bacterial/plant glycogen synthase subfamily.

It catalyses the reaction [(1-&gt;4)-alpha-D-glucosyl](n) + ADP-alpha-D-glucose = [(1-&gt;4)-alpha-D-glucosyl](n+1) + ADP + H(+). It participates in glycan biosynthesis; glycogen biosynthesis. In terms of biological role, synthesizes alpha-1,4-glucan chains using ADP-glucose. The protein is Glycogen synthase of Streptococcus pneumoniae serotype 4 (strain ATCC BAA-334 / TIGR4).